We begin with the raw amino-acid sequence, 630 residues long: Multidrug transporter TPO3 (630 aa).

Residues 1–35 (MVDQESLVSFSSETSQSINSDIDIESQQQPRQYIP) are compositionally biased toward polar residues. Disordered regions lie at residues 1–46 (MVDQ…KERL) and 107–157 (TSTA…NQQP). Residues 37–46 (NEKDGNKERL) show a composition bias toward basic and acidic residues. The span at 125–137 (RRSQNIAASSNSS) shows a compositional bias: low complexity. Asn-135 carries an N-linked (GlcNAc...) asparagine glycan. 12 consecutive transmembrane segments (helical) span residues 190–210 (ILSCLVICVAYGSACITGGLF), 222–242 (AAILSCSLMVIGFSLGPLIWS), 252–272 (LAYFISMGLYTIFNIPCALSP), 282–302 (FLCGVFSSSGLCLVGGSIADM), 312–332 (IAFFAFAPYTGPIIGPLVNGF), 342–362 (LIFWINMAFAGVMWIIVAFIP), 423–443 (FYVCLIYSLLYAFFFAFPVVF), 453–473 (LIGLMFIPILIGATMALATTF), 494–514 (LFGAMIGAPFAAAALWILGAT), 519–539 (IIWVGPASSGLAFGYGMVLIY), 553–575 (YASSALATKVFLRSAGGAAFPLF), and 587–607 (WASWLLAFISTAMILLPFGFY).

This sequence belongs to the major facilitator superfamily. DHA1 family. Polyamines/proton antiporter (TC 2.A.1.2.16) subfamily.

The protein resides in the cell membrane. Its function is as follows. Cell membrane polyamine/proton antiporter, involved in the detoxification of excess polyamines in the cytoplasm. Involved in the resistance to the imidazole antifungal drugs tioconazole, miconazole, clotrimazole and ketoconazole; to the triazole fluconazole; but not to the antifungals flucytosine or amphotericin B. Plays a role in spermine homeostasis, but spermine accumulation in response to clotrimazole is independent of TPO3. This chain is Multidrug transporter TPO3, found in Candida glabrata (strain ATCC 2001 / BCRC 20586 / JCM 3761 / NBRC 0622 / NRRL Y-65 / CBS 138) (Yeast).